We begin with the raw amino-acid sequence, 179 residues long: Large ribosomal subunit protein uL5 (179 aa).

The protein belongs to the universal ribosomal protein uL5 family. In terms of assembly, part of the 50S ribosomal subunit; part of the 5S rRNA/L5/L18/L25 subcomplex. Contacts the 5S rRNA and the P site tRNA. Forms a bridge to the 30S subunit in the 70S ribosome.

Its function is as follows. This is one of the proteins that bind and probably mediate the attachment of the 5S RNA into the large ribosomal subunit, where it forms part of the central protuberance. In the 70S ribosome it contacts protein S13 of the 30S subunit (bridge B1b), connecting the 2 subunits; this bridge is implicated in subunit movement. Contacts the P site tRNA; the 5S rRNA and some of its associated proteins might help stabilize positioning of ribosome-bound tRNAs. In Bacillus cereus (strain 03BB102), this protein is Large ribosomal subunit protein uL5.